The chain runs to 320 residues: Malate dehydrogenase (320 aa).

NAD(+)-binding positions include 10-15 and D34; that span reads GAGQIG. The substrate site is built by R83 and R89. NAD(+) is bound by residues N96 and 119-121; that span reads ITN. Substrate is bound by residues N121 and R152. The active-site Proton acceptor is H176.

The protein belongs to the LDH/MDH superfamily. MDH type 3 family.

It carries out the reaction (S)-malate + NAD(+) = oxaloacetate + NADH + H(+). Catalyzes the reversible oxidation of malate to oxaloacetate. The polypeptide is Malate dehydrogenase (Methylorubrum extorquens (strain CM4 / NCIMB 13688) (Methylobacterium extorquens)).